The primary structure comprises 393 residues: Zinc finger CCCH domain-containing protein 2 (393 aa).

The interval 1 to 71 (MDVVCTEHQM…NRENKEYCYD (71 aa)) is disordered. Positions 20–37 (RKLLLSSKSFPSDSSSPR) are enriched in low complexity. The span at 60-69 (DNNRENKEYC) shows a compositional bias: basic and acidic residues. 2 C3H1-type zinc fingers span residues 122 to 150 (QYSG…HGVF) and 159 to 181 (YRTE…AHSP).

Interacts with MARD1/FLZ9 and RD21A. Specifically expressed in seeds.

It is found in the nucleus. Probable transcription repressor that functions as a negative regulator of phytochrome-mediated promotion of seed germination. Inhibits seed germination by regulating the expression of gibberellic acid (GA) and abscisic acid (ABA) metabolic genes. Does not regulate the expression of the DELLA genes RGA and RGA1. Activated by PIL5, a phytochrome-interacting basic helix-loop-helix transcription factor. Represses directly JMJ20 and JMJ22 expression in the absence of red light (R) and in far-red (FR) conditions. This chain is Zinc finger CCCH domain-containing protein 2, found in Arabidopsis thaliana (Mouse-ear cress).